Reading from the N-terminus, the 506-residue chain is MVVREYNEEMKYIERLSPNSFLIKKGFQSNMNVEGIFYANSRLEKLMFDELRNACRPGMTGGFLPGVKQIANVAALPGIVGRSVGLPDIHSGYGFAIGNMAAFDMSDPTSIVSPGGVGFDINCGVRLLRTNLFEKDVQPVKEQLAQSLFDHIPVGVGSKGIIPMNAHDLEEALEMGMDWSLREGYVWAEDKEHCEEYGRMLNADPSKVSLRAKKRGLPQLGTLGAGNHYAEIQVVEEIYDKYAASKMGIEELGQICVMIHSGSRGFGHQVATDALVEMEKAMKRDKIETNDRQLACARINSPEGQNYLKAMSAAANFAWVNRSSMTFLTRQAFAKQFNTTPDDLDMHVIYDVSHNVAKMEEHMVNGRPKQLLVHRKGSTRAFPPHHPLIPVDYQLTGQPVLVGGSMGTCSFVLTGTETGMVETFGSTCHGAGRSLSRAKSRRNLDYKDVLRDLEEKGISIRVASPKLVQEEAPDSYKDVRDVVQTCHDVGISNKAIKLRPIAVIKG.

Positions 120, 123, 228, 260, and 354 each coordinate Mn(2+). 227-231 (NHYAE) is a binding site for GMP. Residues 354–355 (HN), 403–406 (GGSM), serine 410, 429–432 (HGAG), and lysine 505 contribute to the GMP site. The GMP-histidine intermediate role is filled by histidine 429.

Belongs to the RtcB family. Catalytic component of the tRNA-splicing ligase complex. The cofactor is Mn(2+).

The catalysed reaction is a 3'-end 3'-phospho-ribonucleotide-RNA + a 5'-end dephospho-ribonucleoside-RNA + GTP = a ribonucleotidyl-ribonucleotide-RNA + GMP + diphosphate. It catalyses the reaction a 3'-end 2',3'-cyclophospho-ribonucleotide-RNA + a 5'-end dephospho-ribonucleoside-RNA + GTP + H2O = a ribonucleotidyl-ribonucleotide-RNA + GMP + diphosphate + H(+). In terms of biological role, catalytic subunit of the tRNA-splicing ligase complex that acts by directly joining spliced tRNA halves to mature-sized tRNAs by incorporating the precursor-derived splice junction phosphate into the mature tRNA as a canonical 3',5'-phosphodiester. May act as an RNA ligase with broad substrate specificity, and may function toward other RNAs. This Anopheles gambiae (African malaria mosquito) protein is RNA-splicing ligase RtcB homolog.